We begin with the raw amino-acid sequence, 383 residues long: Opsin Rh4 (383 aa).

Over 1 to 57 the chain is Extracellular; that stretch reads MDIAGSLCNASEGPVLRPEARVSGNGDLQFLGWNVPPDQIQHIPEHWLTQLEPPASM. A glycan (N-linked (GlcNAc...) asparagine) is linked at N9. The helical transmembrane segment at 58–82 threads the bilayer; the sequence is HYMLGVFYIFLFCASTVGNGMVIWI. Residues 83-94 lie on the Cytoplasmic side of the membrane; it reads FSTSKALRTPSN. The chain crosses the membrane as a helical span at residues 95-117; sequence MFVLNLAVFDFIMCLKAPIFIYN. Residues 118–133 are Extracellular-facing; the sequence is SFHRGFALGNTGCQIF. A disulfide bridge connects residues C130 and C207. Residues 134 to 153 form a helical membrane-spanning segment; the sequence is AAIGSYSGIGAGMTNAAIGY. Residues 154–171 are Cytoplasmic-facing; that stretch reads DRLNVITKPMNRNMTFTK. A helical membrane pass occupies residues 172-196; it reads AIIMNVIIWLYCTPWVVLPLTQFWD. Over 197–220 the chain is Extracellular; that stretch reads RFVPEGYLTSCTFDYLTDNFDTRL. Residues 221–248 traverse the membrane as a helical segment; the sequence is FVGTIFFFSFVCPTLMIIYYYSQIVGHV. At 249-284 the chain is on the cytoplasmic side; the sequence is FSHEKALREQAKKMNVESLRSNVDKSKDTAEIRIAK. The chain crosses the membrane as a helical span at residues 285–308; the sequence is AAITICFLFFVSWTPYGVMSLIGA. At 309 to 316 the chain is on the extracellular side; it reads FGDKSLLT. Residues 317–341 form a helical membrane-spanning segment; sequence PGATMIPACTCKLVACIDPFVYAIS. The residue at position 328 (K328) is an N6-(retinylidene)lysine. Topologically, residues 342–383 are cytoplasmic; it reads HPRYRMELQKRCPWLAIDEKAPESSSAASTTTTQEQQQTTAA. The segment at 361 to 383 is disordered; it reads KAPESSSAASTTTTQEQQQTTAA. Residues 364–383 are compositionally biased toward low complexity; the sequence is ESSSAASTTTTQEQQQTTAA.

Belongs to the G-protein coupled receptor 1 family. Opsin subfamily. In terms of processing, phosphorylated on some or all of the serine and threonine residues present in the C-terminal region.

Its subcellular location is the membrane. Visual pigments are the light-absorbing molecules that mediate vision. They consist of an apoprotein, opsin, covalently linked to cis-retinal. The protein is Opsin Rh4 (Rh4) of Drosophila virilis (Fruit fly).